The primary structure comprises 362 residues: E3 ubiquitin-protein ligase TM129 (362 aa).

Residues Met-1–Val-6 lie on the Lumenal side of the membrane. Residues Thr-7–His-27 form a helical membrane-spanning segment. The Cytoplasmic portion of the chain corresponds to Ser-28–Ser-56. A helical membrane pass occupies residues Thr-57 to Ala-77. Over Ala-78–Lys-94 the chain is Lumenal. A helical transmembrane segment spans residues Val-95–Ser-115. Over Gln-116–Arg-362 the chain is Cytoplasmic. The RING-type; degenerate zinc-finger motif lies at Cys-285 to Arg-350.

It belongs to the TMEM129 family. Integral component of ER-resident dislocation complexes.

The protein localises to the endoplasmic reticulum membrane. The enzyme catalyses S-ubiquitinyl-[E2 ubiquitin-conjugating enzyme]-L-cysteine + [acceptor protein]-L-lysine = [E2 ubiquitin-conjugating enzyme]-L-cysteine + N(6)-ubiquitinyl-[acceptor protein]-L-lysine.. It functions in the pathway protein modification; protein ubiquitination. E3 ubiquitin-protein ligase involved in ER-associated protein degradation, preferentially associates with the E2 enzyme UBE2J2. The protein is E3 ubiquitin-protein ligase TM129 (tmem129) of Xenopus tropicalis (Western clawed frog).